Here is a 311-residue protein sequence, read N- to C-terminus: Cytosolic Fe-S cluster assembly factor Nubp1 homolog (311 aa).

[4Fe-4S] cluster is bound by residues Cys-9, Cys-23, Cys-26, and Cys-32. 63-70 (GKGGVGKS) provides a ligand contact to ATP. Cys-240 and Cys-243 together coordinate [4Fe-4S] cluster.

It belongs to the Mrp/NBP35 ATP-binding proteins family. NUBP1/NBP35 subfamily. Heterotetramer of 2 Nubp1 and 2 Nubp2 chains. The cofactor is [4Fe-4S] cluster.

Its subcellular location is the cytoplasm. Its function is as follows. Component of the cytosolic iron-sulfur (Fe/S) protein assembly (CIA) machinery. Required for maturation of extramitochondrial Fe-S proteins. The Nubp1-Nubp2 heterotetramer forms a Fe-S scaffold complex, mediating the de novo assembly of an Fe-S cluster and its transfer to target apoproteins. This chain is Cytosolic Fe-S cluster assembly factor Nubp1 homolog, found in Drosophila pseudoobscura pseudoobscura (Fruit fly).